A 265-amino-acid chain; its full sequence is U6 snRNA phosphodiesterase 1 (265 aa).

Residues 1–22 are disordered; the sequence is MSLVCYESSSSGEDDDETISDN. The active-site Proton acceptor is His109. Residues 109-111 and 195-201 contribute to the AMP site; these read HLS and DFLLHIS. 197-201 contributes to the UMP binding site; it reads LLHIS. Catalysis depends on His199, which acts as the Proton donor.

The protein belongs to the 2H phosphoesterase superfamily. USB1 family.

Its subcellular location is the nucleus. It carries out the reaction a 3'-end uridylyl-uridine-RNA = a 3'-end 2',3'-cyclophospho-uridine-RNA + uridine. Its function is as follows. 3'-5' RNA exonuclease that trims the 3' end of oligo(U) tracts of the pre-U6 small nuclear RNA (snRNA) molecule, leading to the formation of a U6 snRNA 3' end-terminated with a 2',3'-cyclic phosphate.d. Participates in the U6 snRNA 3' end processing that prevents U6 snRNA degradation. This chain is U6 snRNA phosphodiesterase 1, found in Schizosaccharomyces pombe (strain 972 / ATCC 24843) (Fission yeast).